Reading from the N-terminus, the 131-residue chain is Insertion element IS1 protein InsB (131 aa).

The protein belongs to the transposase 27 family.

In terms of biological role, absolutely required for transposition of IS1. This is Insertion element IS1 protein InsB (insB1) from Shigella flexneri.